A 325-amino-acid chain; its full sequence is Protein UL76 (325 aa).

The disordered stretch occupies residues 222-286 (ARASAVAGGR…VRGGGAVEPA (65 aa)). Over residues 247–258 (GPGAQTVSASGA) the composition is skewed to low complexity.

This sequence belongs to the herpesviridae UL24 family.

Its subcellular location is the virion. The protein resides in the host cytoplasm. It is found in the host nucleus. The protein localises to the host nucleolus. It localises to the host Golgi apparatus. In terms of biological role, may participate in nuclear egress of viral particles. Plays a role in the dispersal of several host nucleolar proteins including NCL/nucleolin and NPM1. Since deletion of host NCL/nucleolin negatively impact on nuclear egress, UL76 supposedly acts on this process through its effect on host nucleoli. Induces cell cycle arrest in host cells at the G2/M phase following by apoptosis. The mechanism involves the inhibition of host mitotic complex cyclinB/CDK1. The sequence is that of Protein UL76 (UL76) from Human cytomegalovirus (strain Merlin) (HHV-5).